A 233-amino-acid polypeptide reads, in one-letter code: Pirin-like protein YhaK (233 aa).

The protein belongs to the pirin family. Monomer.

It localises to the cytoplasm. In terms of biological role, does not have quercetin 2,3-dioxygenase activity. The polypeptide is Pirin-like protein YhaK (yhaK) (Escherichia coli (strain K12)).